We begin with the raw amino-acid sequence, 207 residues long: Protein YABBY 6 (207 aa).

A C4-type zinc finger spans residues 16–43; it reads CNFCNTILAVSVPGNSMLNIVTVRCGHC.

Belongs to the YABBY family. In terms of tissue distribution, expressed in leaf blades, leaf sheaths and flowers.

It is found in the nucleus. This is Protein YABBY 6 (YAB6) from Oryza sativa subsp. japonica (Rice).